A 433-amino-acid polypeptide reads, in one-letter code: F-box only protein 15 (433 aa).

Residues 1-41 form the F-box domain; it reads MPSEILVKILSYLDAVTLVCIGCVSRRFYHLADDNLIWVRK.

In terms of assembly, directly interacts with SKP1 and CUL1. Expressed in testis.

In terms of biological role, substrate-recognition component of the SCF (SKP1-CUL1-F-box protein)-type E3 ubiquitin ligase complex. The polypeptide is F-box only protein 15 (Fbxo15) (Mus musculus (Mouse)).